The chain runs to 369 residues: Glutamate 5-kinase (369 aa).

ATP is bound at residue Lys-14. Ser-56, Asp-143, and Asn-155 together coordinate substrate. ATP is bound by residues Ser-175–Asp-176 and Thr-215–Lys-221. The PUA domain maps to Ala-277–Asp-351.

This sequence belongs to the glutamate 5-kinase family.

It localises to the cytoplasm. It catalyses the reaction L-glutamate + ATP = L-glutamyl 5-phosphate + ADP. It participates in amino-acid biosynthesis; L-proline biosynthesis; L-glutamate 5-semialdehyde from L-glutamate: step 1/2. Functionally, catalyzes the transfer of a phosphate group to glutamate to form L-glutamate 5-phosphate. This Corynebacterium efficiens (strain DSM 44549 / YS-314 / AJ 12310 / JCM 11189 / NBRC 100395) protein is Glutamate 5-kinase.